Consider the following 105-residue polypeptide: Heat shock protein HspQ (105 aa).

Positions 75–105 are disordered; sequence GEMQEEHPEQPSMDELARSIRQQLQAPRLRN.

This sequence belongs to the HspQ family.

The protein localises to the cytoplasm. Its function is as follows. Involved in the degradation of certain denaturated proteins, including DnaA, during heat shock stress. This Cronobacter sakazakii (strain ATCC BAA-894) (Enterobacter sakazakii) protein is Heat shock protein HspQ.